Reading from the N-terminus, the 365-residue chain is Class I histocompatibility antigen, Gogo-A*0501 alpha chain (365 aa).

The N-terminal stretch at 1–24 is a signal peptide; that stretch reads MAVVAPRTLLLLLSGALALTQTWA. An alpha-1 region spans residues 25–114; that stretch reads GSHSMRYFST…ALRYYNQSED (90 aa). At 25–308 the chain is on the extracellular side; it reads GSHSMRYFST…EPSSQPTIPI (284 aa). N-linked (GlcNAc...) asparagine glycosylation is present at Asn-110. Residues 115–206 form an alpha-2 region; that stretch reads GSHTIQRMYG…ENGKETLQRT (92 aa). Intrachain disulfides connect Cys-125-Cys-188 and Cys-227-Cys-283. The alpha-3 stretch occupies residues 207 to 298; the sequence is DAPKTHTTHQ…GLPKPLTLRW (92 aa). The 87-residue stretch at 209–295 folds into the Ig-like C1-type domain; that stretch reads PKTHTTHQAV…QHEGLPKPLT (87 aa). The connecting peptide stretch occupies residues 299–308; it reads EPSSQPTIPI. Residues 309–332 traverse the membrane as a helical segment; it reads VGIIAGLVLFGAVIAGAVVAAVRW. The Cytoplasmic segment spans residues 333–365; the sequence is RRKSSDRKGGSYSQAASSDSAQGSDVSLTACKV. Residues 338–365 form a disordered region; it reads DRKGGSYSQAASSDSAQGSDVSLTACKV. Positions 342-359 are enriched in low complexity; it reads GSYSQAASSDSAQGSDVS. Phosphoserine is present on Ser-343. Tyr-344 is subject to Phosphotyrosine. Residues Ser-345, Ser-349, Ser-352, Ser-356, and Ser-359 each carry the phosphoserine modification.

This sequence belongs to the MHC class I family. As to quaternary structure, heterodimer of an alpha chain and a beta chain (beta-2-microglobulin).

It is found in the membrane. Involved in the presentation of foreign antigens to the immune system. The sequence is that of Class I histocompatibility antigen, Gogo-A*0501 alpha chain from Gorilla gorilla gorilla (Western lowland gorilla).